A 319-amino-acid chain; its full sequence is DNA-directed RNA polymerase subunit alpha (319 aa).

Residues 1–227 form an alpha N-terminal domain (alpha-NTD) region; it reads MKEFIFPMKI…KHMNMLTNIS (227 aa). Residues 242–319 are alpha C-terminal domain (alpha-CTD); that stretch reads LMEKLTFSIE…NIGEQRSSEV (78 aa).

It belongs to the RNA polymerase alpha chain family. As to quaternary structure, homodimer. The RNAP catalytic core consists of 2 alpha, 1 beta, 1 beta' and 1 omega subunit. When a sigma factor is associated with the core the holoenzyme is formed, which can initiate transcription.

The catalysed reaction is RNA(n) + a ribonucleoside 5'-triphosphate = RNA(n+1) + diphosphate. Its function is as follows. DNA-dependent RNA polymerase catalyzes the transcription of DNA into RNA using the four ribonucleoside triphosphates as substrates. The protein is DNA-directed RNA polymerase subunit alpha of Hydrogenobaculum sp. (strain Y04AAS1).